A 162-amino-acid chain; its full sequence is Ribosomal RNA large subunit methyltransferase H (162 aa).

Residue G108 participates in S-adenosyl-L-methionine binding.

This sequence belongs to the RNA methyltransferase RlmH family. As to quaternary structure, homodimer.

It is found in the cytoplasm. The enzyme catalyses pseudouridine(1915) in 23S rRNA + S-adenosyl-L-methionine = N(3)-methylpseudouridine(1915) in 23S rRNA + S-adenosyl-L-homocysteine + H(+). Specifically methylates the pseudouridine at position 1915 (m3Psi1915) in 23S rRNA. The chain is Ribosomal RNA large subunit methyltransferase H from Methylobacterium nodulans (strain LMG 21967 / CNCM I-2342 / ORS 2060).